Consider the following 328-residue polypeptide: Glycerol-3-phosphate dehydrogenase [NAD(P)+] (328 aa).

Residues W11, R30, and K103 each contribute to the NADPH site. The sn-glycerol 3-phosphate site is built by K103, G132, and S134. A136 lines the NADPH pocket. The sn-glycerol 3-phosphate site is built by K187, D240, S250, R251, and N252. Catalysis depends on K187, which acts as the Proton acceptor. Residue R251 coordinates NADPH. 2 residues coordinate NADPH: V275 and E277.

The protein belongs to the NAD-dependent glycerol-3-phosphate dehydrogenase family.

It localises to the cytoplasm. The enzyme catalyses sn-glycerol 3-phosphate + NAD(+) = dihydroxyacetone phosphate + NADH + H(+). The catalysed reaction is sn-glycerol 3-phosphate + NADP(+) = dihydroxyacetone phosphate + NADPH + H(+). Its pathway is membrane lipid metabolism; glycerophospholipid metabolism. Functionally, catalyzes the reduction of the glycolytic intermediate dihydroxyacetone phosphate (DHAP) to sn-glycerol 3-phosphate (G3P), the key precursor for phospholipid synthesis. In Thiobacillus denitrificans (strain ATCC 25259 / T1), this protein is Glycerol-3-phosphate dehydrogenase [NAD(P)+].